We begin with the raw amino-acid sequence, 65 residues long: Small ribosomal subunit protein bS21 (65 aa).

This sequence belongs to the bacterial ribosomal protein bS21 family.

The protein is Small ribosomal subunit protein bS21 of Geobacter sp. (strain M21).